A 481-amino-acid polypeptide reads, in one-letter code: Glutamate--tRNA ligase (481 aa).

The 'HIGH' region motif lies at 28-38 (PSPTGFLHLGG). Positions 139–148 (RYDGTWRPEP) are enriched in basic and acidic residues. Residues 139–159 (RYDGTWRPEPGKTLPPVPADR) are disordered. Positions 260–264 (KLSKR) match the 'KMSKS' region motif. K263 contributes to the ATP binding site.

It belongs to the class-I aminoacyl-tRNA synthetase family. Glutamate--tRNA ligase type 1 subfamily. Monomer.

The protein localises to the cytoplasm. The catalysed reaction is tRNA(Glu) + L-glutamate + ATP = L-glutamyl-tRNA(Glu) + AMP + diphosphate. Catalyzes the attachment of glutamate to tRNA(Glu) in a two-step reaction: glutamate is first activated by ATP to form Glu-AMP and then transferred to the acceptor end of tRNA(Glu). This is Glutamate--tRNA ligase from Bordetella parapertussis (strain 12822 / ATCC BAA-587 / NCTC 13253).